A 226-amino-acid polypeptide reads, in one-letter code: Thiopurine S-methyltransferase (226 aa).

S-adenosyl-L-methionine is bound by residues W10, L47, E68, and R130.

Belongs to the class I-like SAM-binding methyltransferase superfamily. TPMT family.

The protein localises to the cytoplasm. It catalyses the reaction S-adenosyl-L-methionine + a thiopurine = S-adenosyl-L-homocysteine + a thiopurine S-methylether.. The sequence is that of Thiopurine S-methyltransferase from Shewanella sediminis (strain HAW-EB3).